Consider the following 920-residue polypeptide: Protein translocase subunit SecA 2 (920 aa).

ATP-binding positions include Gln91, 109–113 (GEGKT), and Asp527. The segment covering 859-870 (GEGSALDRRPTD) has biased composition (basic and acidic residues). The tract at residues 859-920 (GEGSALDRRP…KSRNRRRRKR (62 aa)) is disordered. A compositionally biased stretch (basic residues) spans 906 to 920 (PHRPGKSRNRRRRKR).

Belongs to the SecA family. In terms of assembly, monomer and homodimer. Part of the essential Sec protein translocation apparatus which comprises SecA, SecYEG and auxiliary proteins SecDF. Other proteins may also be involved.

It localises to the cell membrane. The protein resides in the cytoplasm. It catalyses the reaction ATP + H2O + cellular proteinSide 1 = ADP + phosphate + cellular proteinSide 2.. Part of the Sec protein translocase complex. Interacts with the SecYEG preprotein conducting channel. Has a central role in coupling the hydrolysis of ATP to the transfer of proteins into and across the cell membrane, serving as an ATP-driven molecular motor driving the stepwise translocation of polypeptide chains across the membrane. The polypeptide is Protein translocase subunit SecA 2 (Streptomyces avermitilis (strain ATCC 31267 / DSM 46492 / JCM 5070 / NBRC 14893 / NCIMB 12804 / NRRL 8165 / MA-4680)).